The primary structure comprises 66 residues: Large ribosomal subunit protein bL35 (66 aa).

The segment covering 1–15 (MPKMKTKSSAKKRFK) has biased composition (basic residues). The segment at 1-32 (MPKMKTKSSAKKRFKMTATGKVRAGQAGKRHG) is disordered.

This sequence belongs to the bacterial ribosomal protein bL35 family.

This chain is Large ribosomal subunit protein bL35, found in Dinoroseobacter shibae (strain DSM 16493 / NCIMB 14021 / DFL 12).